The following is a 232-amino-acid chain: E3 ubiquitin-protein ligase RNF125 (232 aa).

Over residues 1–10 the composition is skewed to polar residues; that stretch reads MGSVLSTDSG. Positions 1–23 are disordered; that stretch reads MGSVLSTDSGKSAPASATARALE. Glycine 2 is lipidated: N-myristoyl glycine. Zn(2+)-binding residues include cysteine 37 and cysteine 40. The RING-type zinc-finger motif lies at 37–76; it reads CAVCLEVLHQPVRTRCGHVFCRSCIATSLKNNKWTCPYCR. Residues 43–45 are interaction with the C2HC RNF-type zinc finger; that stretch reads VLH. 8 residues coordinate Zn(2+): cysteine 52, histidine 54, cysteine 57, cysteine 60, cysteine 72, cysteine 75, cysteine 100, and cysteine 103. The C2HC RNF-type zinc-finger motif lies at 100–119; the sequence is CAECDTLVCLSEMRAHIRTC. The interval 109–113 is interaction with the RING-type zinc finger; that stretch reads LSEMR. 2 residues coordinate Zn(2+): histidine 115 and cysteine 119. A linker region region spans residues 120 to 128; sequence QKYIDKYGP. Residues 210 to 224 are required for interaction with ubiquitin and for autoubiquitination; it reads EEALIRRVLDRSLLE.

Interacts with UBE2D1. Interacts with VCP/p97; leading to recruit RNF125 to RIGI and promote ubiquitination of RIGI. Autoubiquitinated, leading to its subsequent proteasomal degradation. In terms of tissue distribution, predominantly expressed in lymphoid tissues, including bone marrow, spleen and thymus. Also weakly expressed in other tissues. Predominant in the CD4(+) and CD8(+) T-cells, suggesting that it is preferentially confined to T-cells.

The protein localises to the golgi apparatus membrane. The enzyme catalyses S-ubiquitinyl-[E2 ubiquitin-conjugating enzyme]-L-cysteine + [acceptor protein]-L-lysine = [E2 ubiquitin-conjugating enzyme]-L-cysteine + N(6)-ubiquitinyl-[acceptor protein]-L-lysine.. Its pathway is protein modification; protein ubiquitination. Functionally, E3 ubiquitin-protein ligase that mediates ubiquitination and subsequent proteasomal degradation of target proteins, such as RIGI, MAVS/IPS1, IFIH1/MDA5, JAK1 and p53/TP53. Acts as a negative regulator of type I interferon production by mediating ubiquitination of RIGI at 'Lys-181', leading to RIGI degradation. Mediates ubiquitination and subsequent degradation of p53/TP53. Mediates ubiquitination and subsequent degradation of JAK1. Acts as a positive regulator of T-cell activation. The polypeptide is E3 ubiquitin-protein ligase RNF125 (Homo sapiens (Human)).